Reading from the N-terminus, the 116-residue chain is Protein Wnt-5b (116 aa).

Residue Ser-1 is the site of O-palmitoleoyl serine; by PORCN attachment. Asn-69 and Asn-83 each carry an N-linked (GlcNAc...) asparagine glycan. Residues Cys-82 and Cys-97 are joined by a disulfide bond.

This sequence belongs to the Wnt family. Post-translationally, palmitoleoylation is required for efficient binding to frizzled receptors. Depalmitoleoylation leads to Wnt signaling pathway inhibition.

It is found in the secreted. Its subcellular location is the extracellular space. The protein localises to the extracellular matrix. In terms of biological role, ligand for members of the frizzled family of seven transmembrane receptors. Probable developmental protein. May be a signaling molecule which affects the development of discrete regions of tissues. Is likely to signal over only few cell diameters. In Alopias vulpinus (Common thresher shark), this protein is Protein Wnt-5b (WNT-5B).